We begin with the raw amino-acid sequence, 193 residues long: Rho-related GTP-binding protein RhoA-D (193 aa).

Residues 12–19 (GDGACGKT), 30–37 (FPEVYVPT), 59–63 (DTAGQ), 117–120 (NKKD), and 160–162 (SAK) contribute to the GTP site. The (Microbial infection) O-linked (GlcNAc) tyrosine; by Yersinia Afp18 glycan is linked to Y34. C190 carries the post-translational modification Cysteine methyl ester. C190 is lipidated: S-geranylgeranyl cysteine. The propeptide at 191–193 (LLL) is removed in mature form.

This sequence belongs to the small GTPase superfamily. Rho family. (Microbial infection) Glycosylated at Tyr-34 by Yersinia ruckeri toxin Afp18. Mono-O-GlcNAcylation by Afp18 inhibits RhoA activation by guanine nucleotide exchange factors and blocks RhoA signaling.

It localises to the cell membrane. In terms of biological role, regulates a signal transduction pathway linking plasma membrane receptors to the assembly of focal adhesions and actin stress fibers. The polypeptide is Rho-related GTP-binding protein RhoA-D (Danio rerio (Zebrafish)).